The primary structure comprises 221 residues: HP1-HOAP-interacting protein (221 aa).

A disordered region spans residues Asn69–Tyr113. Over residues Val86–Ser103 the composition is skewed to low complexity.

As to quaternary structure, component of the HipHop-HOAP telomere-capping complex, composed of at least HipHop and cav/HOAP, and may include Su(var)205/HP1; HipHop and cav/HOAP, but not Su(var)205, are interdependent for their protein stability. Interacts (via N-terminus) with cav/HOAP and Su(var)205/HP1. The HipHop-HOAP complex recruits the MTV complex, consisting of moi/modigliani, tea and ver/verrocchio, to telomeres to form the terminin telomere-capping complex.

It is found in the nucleus. The protein localises to the chromosome. It localises to the telomere. Functionally, part of the HipHop-HOAP complex that recruits the MTV complex to form the terminin telomere-capping complex, which binds to chromosome ends in a sequence-independent manner and prevents telomere fusion. The chain is HP1-HOAP-interacting protein from Drosophila melanogaster (Fruit fly).